A 248-amino-acid chain; its full sequence is UPF0246 protein A1I_02510 (248 aa).

The protein belongs to the UPF0246 family.

The sequence is that of UPF0246 protein A1I_02510 from Rickettsia bellii (strain OSU 85-389).